Reading from the N-terminus, the 433-residue chain is Deoxyguanosinetriphosphate triphosphohydrolase-like protein 2 (433 aa).

Positions 61-248 (RLTHSLEVAQ…METADDIAYT (188 aa)) constitute an HD domain.

It belongs to the dGTPase family. Type 2 subfamily.

The polypeptide is Deoxyguanosinetriphosphate triphosphohydrolase-like protein 2 (Deinococcus radiodurans (strain ATCC 13939 / DSM 20539 / JCM 16871 / CCUG 27074 / LMG 4051 / NBRC 15346 / NCIMB 9279 / VKM B-1422 / R1)).